Reading from the N-terminus, the 85-residue chain is Cell division topological specificity factor (85 aa).

Belongs to the MinE family.

Its function is as follows. Prevents the cell division inhibition by proteins MinC and MinD at internal division sites while permitting inhibition at polar sites. This ensures cell division at the proper site by restricting the formation of a division septum at the midpoint of the long axis of the cell. This chain is Cell division topological specificity factor, found in Thioalkalivibrio sulfidiphilus (strain HL-EbGR7).